The chain runs to 369 residues: UPF0754 membrane protein Aflv_2299 (369 aa).

A run of 2 helical transmembrane segments spans residues 1–21 and 347–367; these read MGLF…GGMT and YLGA…TFFV.

This sequence belongs to the UPF0754 family.

The protein localises to the cell membrane. This is UPF0754 membrane protein Aflv_2299 from Anoxybacillus flavithermus (strain DSM 21510 / WK1).